Reading from the N-terminus, the 312-residue chain is ADP-L-glycero-D-manno-heptose-6-epimerase (312 aa).

Residues 10–11 (FI), 31–32 (DN), Lys-38, Lys-53, 75–79 (EGACS), and Asn-92 contribute to the NADP(+) site. Catalysis depends on Tyr-140, which acts as the Proton acceptor. NADP(+) is bound at residue Lys-144. Asn-169 is a binding site for substrate. NADP(+)-binding residues include Val-170 and Lys-178. Lys-178 (proton acceptor) is an active-site residue. Residues Ser-180, His-187, 201–204 (FAGS), Arg-209, and Tyr-274 each bind substrate.

This sequence belongs to the NAD(P)-dependent epimerase/dehydratase family. HldD subfamily. As to quaternary structure, homopentamer. NADP(+) is required as a cofactor.

The catalysed reaction is ADP-D-glycero-beta-D-manno-heptose = ADP-L-glycero-beta-D-manno-heptose. It functions in the pathway nucleotide-sugar biosynthesis; ADP-L-glycero-beta-D-manno-heptose biosynthesis; ADP-L-glycero-beta-D-manno-heptose from D-glycero-beta-D-manno-heptose 7-phosphate: step 4/4. It participates in bacterial outer membrane biogenesis; LPS core biosynthesis. Catalyzes the interconversion between ADP-D-glycero-beta-D-manno-heptose and ADP-L-glycero-beta-D-manno-heptose via an epimerization at carbon 6 of the heptose. The chain is ADP-L-glycero-D-manno-heptose-6-epimerase from Photorhabdus laumondii subsp. laumondii (strain DSM 15139 / CIP 105565 / TT01) (Photorhabdus luminescens subsp. laumondii).